The primary structure comprises 406 residues: Tryptophan synthase beta chain (406 aa).

N6-(pyridoxal phosphate)lysine is present on K99.

It belongs to the TrpB family. As to quaternary structure, tetramer of two alpha and two beta chains. The cofactor is pyridoxal 5'-phosphate.

The catalysed reaction is (1S,2R)-1-C-(indol-3-yl)glycerol 3-phosphate + L-serine = D-glyceraldehyde 3-phosphate + L-tryptophan + H2O. It participates in amino-acid biosynthesis; L-tryptophan biosynthesis; L-tryptophan from chorismate: step 5/5. The beta subunit is responsible for the synthesis of L-tryptophan from indole and L-serine. This Agrobacterium fabrum (strain C58 / ATCC 33970) (Agrobacterium tumefaciens (strain C58)) protein is Tryptophan synthase beta chain (trpB).